The chain runs to 142 residues: Large-conductance mechanosensitive channel (142 aa).

Helical transmembrane passes span 14–34 (VMDL…VDSV) and 82–102 (GNFI…FLLI).

The protein belongs to the MscL family. Homopentamer.

The protein localises to the cell inner membrane. Functionally, channel that opens in response to stretch forces in the membrane lipid bilayer. May participate in the regulation of osmotic pressure changes within the cell. The protein is Large-conductance mechanosensitive channel of Sinorhizobium medicae (strain WSM419) (Ensifer medicae).